The primary structure comprises 292 residues: MSILQILDNDVLRNIIDYLDLKDETAFVSTCQYLYYYRKTFRRIYRLEKIIVFKLKNPDHIIPENTTHLVVTFNQSIGKINIPKNVSRLTFCPQFNKSIDDIPSTITHLSLGAAFNGEVSNIPTSVTHLKLGVSFKRKLSEIPLSVTHLTLNSYDTEIHGPIPSTITHLAFAEDFNQSINGLVPNFVGHLRIRQYNSNLEIPNHIYHLSLNSYEYNKQNELPNYIKFLDIRYIFPVKYKFIPETVTHLSFGNWFNANITTIIPNITHLVIKSCYECLIKNKIPDNITHLILY.

The stretch at 95–134 (FNKSIDDIPSTITHLSLGAAFNGEVSNIPTSVTHLKLGVS) is one FNIP repeat.

The sequence is that of Putative FNIP repeat-containing protein L281 from Acanthamoeba polyphaga mimivirus (APMV).